A 394-amino-acid chain; its full sequence is Queuine tRNA-ribosyltransferase (394 aa).

D95 functions as the Proton acceptor in the catalytic mechanism. Residues 95 to 99 (DSGGF), D149, Q190, and G217 each bind substrate. Positions 248-254 (GVGTPID) are RNA binding. D267 serves as the catalytic Nucleophile. Residues 272 to 276 (TRNAR) form an RNA binding; important for wobble base 34 recognition region. Zn(2+) contacts are provided by C305, C307, C310, and H337. Residues 375-394 (NDANETVGATESTESTESTE) are disordered.

This sequence belongs to the queuine tRNA-ribosyltransferase family. Homodimer. Within each dimer, one monomer is responsible for RNA recognition and catalysis, while the other monomer binds to the replacement base PreQ1. Zn(2+) serves as cofactor.

The catalysed reaction is 7-aminomethyl-7-carbaguanine + guanosine(34) in tRNA = 7-aminomethyl-7-carbaguanosine(34) in tRNA + guanine. Its pathway is tRNA modification; tRNA-queuosine biosynthesis. Catalyzes the base-exchange of a guanine (G) residue with the queuine precursor 7-aminomethyl-7-deazaguanine (PreQ1) at position 34 (anticodon wobble position) in tRNAs with GU(N) anticodons (tRNA-Asp, -Asn, -His and -Tyr). Catalysis occurs through a double-displacement mechanism. The nucleophile active site attacks the C1' of nucleotide 34 to detach the guanine base from the RNA, forming a covalent enzyme-RNA intermediate. The proton acceptor active site deprotonates the incoming PreQ1, allowing a nucleophilic attack on the C1' of the ribose to form the product. After dissociation, two additional enzymatic reactions on the tRNA convert PreQ1 to queuine (Q), resulting in the hypermodified nucleoside queuosine (7-(((4,5-cis-dihydroxy-2-cyclopenten-1-yl)amino)methyl)-7-deazaguanosine). This chain is Queuine tRNA-ribosyltransferase, found in Sorangium cellulosum (strain So ce56) (Polyangium cellulosum (strain So ce56)).